The primary structure comprises 315 residues: Replication factor C small subunit (315 aa).

An ATP-binding site is contributed by 43–50 (GSPGVGKT).

The protein belongs to the activator 1 small subunits family. RfcS subfamily. In terms of assembly, heteromultimer composed of small subunits (RfcS) and large subunits (RfcL).

In terms of biological role, part of the RFC clamp loader complex which loads the PCNA sliding clamp onto DNA. The polypeptide is Replication factor C small subunit (Methanococcus maripaludis (strain C6 / ATCC BAA-1332)).